The chain runs to 515 residues: MDEFHRCGKEDSFWQQCFLYPLFFKEDLYAISHDHYLDVSSSSRPMEHLSSNDQLSFLTVKRLIGQIRQQNHSIVLFVNCDPNPLADRKKSFYSESVLEALTLVLEVPFSIWSKYSVEGMNESKSFRSIHSIFPFLEDKFPHSNSILDARIPYSIHPEILVRTFRRWIRDAPSLHPLRSVLYEYRNSTENLQRSIIVVPRVNTRFFLFLWNYYVCECESILFSRLKRSSHSRSLSHGSFPQRTHFHRKIKHIIIFSRRNSLKSIWSLKDPKIHYVRYGERPIIAIKGAHLLVKKCRYYLLIFRQFYFHLWSEPYRVCSHQLSKNCSSSPGYFLRVRMNPILVRTKMLDELFIADLITDEIDPIVPIVPIIGLLATEKFCDISGRPISKLSWTSLTDDDILDRFDQIWRNLFHYYSGSFDRDGLYRIKYILSLSCAKTLACKHKSTIRVVRKELGPELFKKSFSKEREFDSLPFSSKAAARSQRERIWHSDIPQINPLANSWQKIQDLKIGNLFDQ.

The protein belongs to the intron maturase 2 family. MatK subfamily.

The protein localises to the plastid. The protein resides in the chloroplast. Functionally, usually encoded in the trnK tRNA gene intron. Probably assists in splicing its own and other chloroplast group II introns. This Pinus contorta (Shore pine) protein is Maturase K.